The sequence spans 175 residues: NADH-ubiquinone oxidoreductase chain 6 (175 aa).

5 helical membrane-spanning segments follow: residues 1 to 21 (MMTY…VGFA), 25 to 45 (SPIY…AIVL), 47 to 67 (FGGS…MLVV), 88 to 108 (AVLA…CYIL), and 149 to 169 (YGTW…LVIM).

Belongs to the complex I subunit 6 family. Core subunit of respiratory chain NADH dehydrogenase (Complex I) which is composed of 45 different subunits.

The protein localises to the mitochondrion inner membrane. The enzyme catalyses a ubiquinone + NADH + 5 H(+)(in) = a ubiquinol + NAD(+) + 4 H(+)(out). Functionally, core subunit of the mitochondrial membrane respiratory chain NADH dehydrogenase (Complex I) which catalyzes electron transfer from NADH through the respiratory chain, using ubiquinone as an electron acceptor. Essential for the catalytic activity and assembly of complex I. The polypeptide is NADH-ubiquinone oxidoreductase chain 6 (MT-ND6) (Canis lupus familiaris (Dog)).